Reading from the N-terminus, the 54-residue chain is UPF0391 membrane protein Aave_3864 (54 aa).

2 helical membrane passes run 5–25 (AVVF…GIAA) and 28–48 (VGIA…TFVL).

This sequence belongs to the UPF0391 family.

The protein resides in the cell membrane. The protein is UPF0391 membrane protein Aave_3864 of Paracidovorax citrulli (strain AAC00-1) (Acidovorax citrulli).